The primary structure comprises 306 residues: Curved DNA-binding protein (306 aa).

A J domain is found at 5 to 69 (DYYAIMGVKP…QRRAEYDQMW (65 aa)).

The protein resides in the cytoplasm. It localises to the nucleoid. Its function is as follows. DNA-binding protein that preferentially recognizes a curved DNA sequence. It is probably a functional analog of DnaJ; displays overlapping activities with DnaJ, but functions under different conditions, probably acting as a molecular chaperone in an adaptive response to environmental stresses other than heat shock. Lacks autonomous chaperone activity; binds native substrates and targets them for recognition by DnaK. Its activity is inhibited by the binding of CbpM. This Escherichia coli O17:K52:H18 (strain UMN026 / ExPEC) protein is Curved DNA-binding protein.